Consider the following 474-residue polypeptide: Histone H2B.v2 (474 aa).

Disordered regions lie at residues 99–123 (FNNG…QNEL), 276–295 (TTFT…ISGD), and 328–394 (FNDN…VNNN). Composition is skewed to low complexity over residues 100 to 110 (NNGGNNNNNNE), 276 to 286 (TTFTQQEQQEQ), and 329 to 368 (NDNN…NNKN).

Belongs to the histone H2B family.

The chain is Histone H2B.v2 (H2Bv2) from Dictyostelium discoideum (Social amoeba).